The primary structure comprises 374 residues: Transcription factor IIIA (374 aa).

7 C2H2-type zinc fingers span residues 23-47 (FHCP…LRTH), 53-77 (FVCD…KRCH), 83-107 (FSCH…IEVH), 113-138 (YACT…SACH), 144-169 (YPCT…NRAH), 204-226 (PSCS…VVLH), and 236-261 (YHCP…SVIH). Residues 267-291 (FHCDSCGTKFGYKHMLQRHLERGTC) form a C2H2-type 8; atypical zinc finger. The C2H2-type 9 zinc-finger motif lies at 349-374 (YSCSFPECNYRFKRLYDMHRHLNSHH).

The protein resides in the nucleus. Functionally, is required for correct transcription of 5S RNA genes by RNA polymerase III. Also binds the transcribed 5S RNA's. Initiates transcription of the 5S ribosomal RNA gene. In Schizosaccharomyces pombe (strain 972 / ATCC 24843) (Fission yeast), this protein is Transcription factor IIIA (sfc2).